Reading from the N-terminus, the 80-residue chain is Toxin TdNa1 (80 aa).

Positions 1-20 (MKGIILFISCLMLIDVVVES) are cleaved as a signal peptide. The 59-residue stretch at 21 to 79 (RDAYPADWRGCKFSCFWGSSSWCNEECTSLGGSSGYCAWPACWCYGLPDSVRYYNNKCH) folds into the LCN-type CS-alpha/beta domain. 4 cysteine pairs are disulfide-bonded: Cys31/Cys78, Cys35/Cys57, Cys43/Cys62, and Cys47/Cys64.

The protein belongs to the long (4 C-C) scorpion toxin superfamily. Sodium channel inhibitor family. Beta subfamily. As to expression, expressed by the venom gland.

The protein resides in the secreted. Inhibits the sodium (Nav) currents in an apparent irreversible manner. Produces small depolarization and induces repetitive firing in squid axons. Is specific for arthropods (crickets, triatomides, crabs and squids), but is non-toxic to mice. The sequence is that of Toxin TdNa1 from Tityus discrepans (Venezuelan scorpion).